The chain runs to 288 residues: Nucleotide-binding protein ASA_0318 (288 aa).

8–15 contacts ATP; that stretch reads GRSGSGKT. 56–59 lines the GTP pocket; sequence DVRN.

It belongs to the RapZ-like family.

Its function is as follows. Displays ATPase and GTPase activities. The polypeptide is Nucleotide-binding protein ASA_0318 (Aeromonas salmonicida (strain A449)).